Reading from the N-terminus, the 465-residue chain is 3-isopropylmalate dehydratase large subunit (465 aa).

Positions 347, 407, and 410 each coordinate [4Fe-4S] cluster.

The protein belongs to the aconitase/IPM isomerase family. LeuC type 1 subfamily. Heterodimer of LeuC and LeuD. [4Fe-4S] cluster is required as a cofactor.

The catalysed reaction is (2R,3S)-3-isopropylmalate = (2S)-2-isopropylmalate. It participates in amino-acid biosynthesis; L-leucine biosynthesis; L-leucine from 3-methyl-2-oxobutanoate: step 2/4. Catalyzes the isomerization between 2-isopropylmalate and 3-isopropylmalate, via the formation of 2-isopropylmaleate. The chain is 3-isopropylmalate dehydratase large subunit from Aeromonas hydrophila subsp. hydrophila (strain ATCC 7966 / DSM 30187 / BCRC 13018 / CCUG 14551 / JCM 1027 / KCTC 2358 / NCIMB 9240 / NCTC 8049).